The chain runs to 854 residues: MFYNFLLYLVIHVNYALDALTFNKFLSLDGIVSWPMIIKDRVYFLSDHEGISNLYSVNLEGKDLTKHTNFTEYYCRNASSDGRRIVFQNSGDIYLYDPEKQELKLLDIDLPTDRKKKQGKFVEVLDYTTEAIANDKYLSLISRGKVFLMRHWDGPAVQLGEKQGVRYKQIQLLPNGDTVVLDTNDDKLTFLSKDGSIKKLNVDLGRIERIKVSPDGKKILISNNRLELWLYEVDTTNLRLIDKSEYDVISQMDWHPDNEWFAYTFPESYSTQSIKLAHISGKVIRITSPYGYDFSPSFDPDGRYLYFLSARHLDPTNDKVIFNMSFQRVIKPYLVVLSNTYSPFNQSLEETTSDKKVEIEGIEDRVIPFPVDEDYYIRIEGAKNNKVFLFSLPIKGYRYPGETLGKLEVFDLDSKTKELYADNVKSFSLTIDKGKILILFKDSIRLFDVNTKPDLNATGKKGGIVDLSRIKVYVDPEREWKQMFREAWKLMQQNYWKPDGLKDWESVLLKYEKLIDRISTRYELSDLIQEMQGETKTSHSYEMPYDYDTAEPLPIGGLGADYEYDKENKCYKIARIYVGDPTNENERSPLRDPGVQLNIGDCIKAVDGEEVKYNILSYLVNKDQVVLDVITKGKTKRVTVKLLKDEKFLIYRYWVEKNRQYVHEKSKGKLGYVHIPDMMYQGFAEFYRLFLSEFHREGLIVDVRFNRGGFISGLILEKLLLKRMGYVVRRNGKELPHPFFSSPGVIVAITNQYAGSDGDIFSYLFKKYKLGILIGRRTWGGVIGINVRDRLADNSAVSQPEFAVHFHDIGLKIENYGVDPDIEVDIKPEDYANGRDPQLDTAIELALKQLEEKS.

Catalysis depends on His539, which acts as the Charge relay system. The segment at Pro554–Glu646 is PDZ-like. Gly709 lines the substrate pocket. Ser756 serves as the catalytic Nucleophile. Glu814 serves as the catalytic Charge relay system.

It belongs to the peptidase S41B family.

It localises to the cytoplasm. Its function is as follows. Degrades oligopeptides in a sequential manner. In Sulfurisphaera tokodaii (strain DSM 16993 / JCM 10545 / NBRC 100140 / 7) (Sulfolobus tokodaii), this protein is Putative Tricorn-like protease C-terminal subunit (triC).